The sequence spans 58 residues: Large ribosomal subunit protein bL32 (58 aa).

Belongs to the bacterial ribosomal protein bL32 family.

The sequence is that of Large ribosomal subunit protein bL32 from Prochlorococcus marinus (strain MIT 9515).